The primary structure comprises 206 residues: Small ribosomal subunit protein uS4 (206 aa).

The S4 RNA-binding domain occupies 98–161; the sequence is RRLDNVVYRL…RSMELIKNNL (64 aa).

It belongs to the universal ribosomal protein uS4 family. In terms of assembly, part of the 30S ribosomal subunit. Contacts protein S5. The interaction surface between S4 and S5 is involved in control of translational fidelity.

Its function is as follows. One of the primary rRNA binding proteins, it binds directly to 16S rRNA where it nucleates assembly of the body of the 30S subunit. With S5 and S12 plays an important role in translational accuracy. This chain is Small ribosomal subunit protein uS4, found in Caldanaerobacter subterraneus subsp. tengcongensis (strain DSM 15242 / JCM 11007 / NBRC 100824 / MB4) (Thermoanaerobacter tengcongensis).